Consider the following 110-residue polypeptide: Holo-[acyl-carrier-protein] synthase (110 aa).

Mg(2+)-binding residues include Asp8 and Glu54.

Belongs to the P-Pant transferase superfamily. AcpS family. The cofactor is Mg(2+).

Its subcellular location is the cytoplasm. It catalyses the reaction apo-[ACP] + CoA = holo-[ACP] + adenosine 3',5'-bisphosphate + H(+). In terms of biological role, transfers the 4'-phosphopantetheine moiety from coenzyme A to a Ser of acyl-carrier-protein. This is Holo-[acyl-carrier-protein] synthase from Mycoplasma capricolum subsp. capricolum (strain California kid / ATCC 27343 / NCTC 10154).